The following is a 183-amino-acid chain: Streptavidin-V1 (183 aa).

The N-terminal stretch at 1–24 is a signal peptide; sequence MRKIVVAAIAVSLTTVSITASASA. Positions 37–159 constitute an Avidin-like domain; it reads AEAGITGTWY…GHDTFTKVKP (123 aa). Residues Y67 and Y78 each coordinate biotin. The short motif at 83–85 is the Cell attachment site; atypical element; it reads RYD. Residues W116, W132, and W144 each contribute to the biotin site.

The protein belongs to the avidin/streptavidin family. In terms of assembly, homotetramer.

It is found in the secreted. In terms of biological role, the biological function of streptavidin is not known. Forms a strong non-covalent specific complex with biotin (one molecule of biotin per subunit of streptavidin). This chain is Streptavidin-V1, found in Streptomyces violaceus (Streptomyces venezuelae).